Consider the following 464-residue polypeptide: Desmin (464 aa).

Position 2 is a blocked amino end (Ser) (Ser2). The tract at residues 2–100 (SQSYSSSQRV…QEFLQTRTNE (99 aa)) is head. Phosphoserine; by CDK1 is present on residues Ser7 and Ser23. Thr65 is modified (phosphothreonine; by CDK1). Positions 100–408 (EKVELQELND…KLLEGEENRI (309 aa)) constitute an IF rod domain. A coil 1A region spans residues 101–133 (KVELQELNDRFANYIEKVRFLEQQNALMVAEVN). A linker 1 region spans residues 134–143 (RLRGKEPTRV). The coil 1B stretch occupies residues 144-244 (AEMYEEELRE…HEEEIRELQA (101 aa)). The interval 245–260 (QLQEQHIQVEMDISKP) is linker 12. The interval 261–279 (DLTAALRDIRAQYESIAAK) is coil 2A. The segment at 280–287 (NIAEAEEW) is linker 2. The interval 288–404 (YKSKVSDLTQ…ATYRKLLEGE (117 aa)) is coil 2B. Residues 405 to 464 (ENRISIPMHQTFASALNFRETSPDQRGSEVHTKKTVMIKTIETRDGEVVSEATQQQHEVL) form a tail region.

The protein belongs to the intermediate filament family. Homomer.

Its subcellular location is the cytoplasm. The protein localises to the myofibril. It is found in the sarcomere. The protein resides in the z line. It localises to the cell membrane. Its subcellular location is the sarcolemma. In terms of biological role, muscle-specific type III intermediate filament essential for proper muscular structure and function. Plays a crucial role in maintaining the structure of sarcomeres, inter-connecting the Z-disks and forming the myofibrils, linking them not only to the sarcolemmal cytoskeleton, but also to the nucleus and mitochondria, thus providing strength for the muscle fiber during activity. In adult striated muscle they form a fibrous network connecting myofibrils to each other and to the plasma membrane from the periphery of the Z-line structures. In Gallus gallus (Chicken), this protein is Desmin (DES).